A 621-amino-acid polypeptide reads, in one-letter code: Chaperone protein HscA homolog (621 aa).

Belongs to the heat shock protein 70 family.

Chaperone involved in the maturation of iron-sulfur cluster-containing proteins. Has a low intrinsic ATPase activity which is markedly stimulated by HscB. This Ralstonia nicotianae (strain ATCC BAA-1114 / GMI1000) (Ralstonia solanacearum) protein is Chaperone protein HscA homolog.